The following is a 287-amino-acid chain: uncharacterized protein (287 aa).

The region spanning 133–239 is the THUMP domain; sequence CEVGKTKKMT…KNIIGISIVQ (107 aa). Residues 257–287 are disordered; that stretch reads ENTKSIPNDSKLDNFDRDKNQIINDKAEHAE. The segment covering 266-287 has biased composition (basic and acidic residues); that stretch reads SKLDNFDRDKNQIINDKAEHAE.

This is an uncharacterized protein from Schizosaccharomyces pombe (strain 972 / ATCC 24843) (Fission yeast).